The sequence spans 253 residues: Bridging integrator 3 (253 aa).

Residues 9-232 (GQPKKQIVSK…LDQPGHSDEQ (224 aa)) form the BAR domain. Coiled coils occupy residues 16-57 (VSKT…AMSK) and 120-151 (SLNM…KEKT). The tract at residues 222 to 241 (QLDQPGHSDEQRERENETKL) is disordered. The segment covering 227 to 241 (GHSDEQRERENETKL) has biased composition (basic and acidic residues).

The protein localises to the cytoplasm. It is found in the cytoskeleton. Involved in cytokinesis and septation where it has a role in the localization of F-actin. The sequence is that of Bridging integrator 3 (Bin3) from Mus musculus (Mouse).